A 133-amino-acid polypeptide reads, in one-letter code: Small ribosomal subunit protein uS8c (133 aa).

Disordered stretches follow at residues 1–23 (MGND…GAET) and 44–133 (FSGN…HVWR). Composition is skewed to polar residues over residues 12 to 23 (APRNASSRGAET) and 55 to 66 (TNRFPVSTSKYQ). Residues 67-81 (GRTRKARITTRRRVS) show a composition bias toward basic residues. A compositionally biased stretch (basic and acidic residues) spans 114 to 133 (TDREARQKRIGGEAPRHVWR).

This sequence belongs to the universal ribosomal protein uS8 family. In terms of assembly, part of the 30S ribosomal subunit.

The protein localises to the plastid. It is found in the chloroplast. In terms of biological role, one of the primary rRNA binding proteins, it binds directly to 16S rRNA central domain where it helps coordinate assembly of the platform of the 30S subunit. The protein is Small ribosomal subunit protein uS8c (rps8) of Selaginella uncinata (Blue spike-moss).